Here is a 309-residue protein sequence, read N- to C-terminus: Isoflavone reductase homolog IRL (309 aa).

NADP(+) is bound by residues 12-18 (GGTGYLG), arginine 37, and lysine 46. Lysine 134 serves as the catalytic Proton acceptor. An NADP(+)-binding site is contributed by arginine 138.

This sequence belongs to the NmrA-type oxidoreductase family. Isoflavone reductase subfamily. As to quaternary structure, monomer.

Its subcellular location is the cytoplasm. The protein operates within alkaloid biosynthesis. In terms of biological role, reductase that may be involved in a late step of alkaloid biosynthesis. The sequence is that of Isoflavone reductase homolog IRL from Zea mays (Maize).